A 197-amino-acid polypeptide reads, in one-letter code: Recombination protein RecR (197 aa).

The C4-type zinc finger occupies 54–69; sequence CQQCNNYTEQTLCTLC. A Toprim domain is found at 77–172; the sequence is TLLCVVESPA…NISQLAHGIP (96 aa).

The protein belongs to the RecR family.

Functionally, may play a role in DNA repair. It seems to be involved in an RecBC-independent recombinational process of DNA repair. It may act with RecF and RecO. This Legionella pneumophila (strain Paris) protein is Recombination protein RecR.